Reading from the N-terminus, the 462-residue chain is ATP synthase subunit beta (462 aa).

151–158 (GGAGVGKT) is a binding site for ATP.

Belongs to the ATPase alpha/beta chains family. In terms of assembly, F-type ATPases have 2 components, CF(1) - the catalytic core - and CF(0) - the membrane proton channel. CF(1) has five subunits: alpha(3), beta(3), gamma(1), delta(1), epsilon(1). CF(0) has four main subunits: a(1), b(1), b'(1) and c(9-12).

It localises to the cell inner membrane. The enzyme catalyses ATP + H2O + 4 H(+)(in) = ADP + phosphate + 5 H(+)(out). Its function is as follows. Produces ATP from ADP in the presence of a proton gradient across the membrane. The catalytic sites are hosted primarily by the beta subunits. The chain is ATP synthase subunit beta from Chlorobium limicola (strain DSM 245 / NBRC 103803 / 6330).